A 206-amino-acid chain; its full sequence is Holliday junction branch migration complex subunit RuvA (206 aa).

The domain I stretch occupies residues 1–64 (MIGRLHGIII…EDAQLLYGFN (64 aa)). The segment at 65 to 143 (TRQERTLFRE…GWISHDLFTP (79 aa)) is domain II. Residues 144–157 (YTDAAPVDHEPSLA) form a flexible linker region. The interval 158–206 (PADTVESEAVAALLALGYKPQQASLVVSKVIKPEMTVENVIREALRSML) is domain III.

The protein belongs to the RuvA family. In terms of assembly, homotetramer. Forms an RuvA(8)-RuvB(12)-Holliday junction (HJ) complex. HJ DNA is sandwiched between 2 RuvA tetramers; dsDNA enters through RuvA and exits via RuvB. An RuvB hexamer assembles on each DNA strand where it exits the tetramer. Each RuvB hexamer is contacted by two RuvA subunits (via domain III) on 2 adjacent RuvB subunits; this complex drives branch migration. In the full resolvosome a probable DNA-RuvA(4)-RuvB(12)-RuvC(2) complex forms which resolves the HJ.

Its subcellular location is the cytoplasm. Its function is as follows. The RuvA-RuvB-RuvC complex processes Holliday junction (HJ) DNA during genetic recombination and DNA repair, while the RuvA-RuvB complex plays an important role in the rescue of blocked DNA replication forks via replication fork reversal (RFR). RuvA specifically binds to HJ cruciform DNA, conferring on it an open structure. The RuvB hexamer acts as an ATP-dependent pump, pulling dsDNA into and through the RuvAB complex. HJ branch migration allows RuvC to scan DNA until it finds its consensus sequence, where it cleaves and resolves the cruciform DNA. This Tolumonas auensis (strain DSM 9187 / NBRC 110442 / TA 4) protein is Holliday junction branch migration complex subunit RuvA.